Reading from the N-terminus, the 89-residue chain is DNA/RNA-binding protein Alba (89 aa).

It belongs to the histone-like Alba family.

The protein resides in the cytoplasm. The protein localises to the chromosome. Functionally, binds double-stranded DNA tightly but without sequence specificity. Involved in DNA compaction. The sequence is that of DNA/RNA-binding protein Alba from Methanococcus maripaludis (strain DSM 14266 / JCM 13030 / NBRC 101832 / S2 / LL).